The chain runs to 293 residues: MRIKVRAPATIANFGPGFDVFGMAIDKPFDEVVVEEFNEFEIISSGYPVPNGEDNIALFSAKTLFKMLNIEGGLRIKLKKGIRPKSGLGSSGASAVAGALGAAKLLGVSNDELILKAAMKGEEKASGEPHPDNVVPSYYGGFTVIESKSPLRVHFVDAKLRGVVVLPEVEIPTAKARKILPSMVPLKDAVKNIAMASSLILALKEGDLETIGRLLDDNLALPYRKKLMPWFDEIRRVALETGAYGITVSGSGPALFAIGENLKDIGKTIVEKFEELGIKAEYWVTKTGRGAKT.

83 to 93 (RPKSGLGSSGA) serves as a coordination point for ATP.

Belongs to the GHMP kinase family. Homoserine kinase subfamily.

Its subcellular location is the cytoplasm. It catalyses the reaction L-homoserine + ATP = O-phospho-L-homoserine + ADP + H(+). Its pathway is amino-acid biosynthesis; L-threonine biosynthesis; L-threonine from L-aspartate: step 4/5. Functionally, catalyzes the ATP-dependent phosphorylation of L-homoserine to L-homoserine phosphate. This is Homoserine kinase from Pyrococcus horikoshii (strain ATCC 700860 / DSM 12428 / JCM 9974 / NBRC 100139 / OT-3).